A 233-amino-acid polypeptide reads, in one-letter code: Peroxisomal membrane protein 11-5 (233 aa).

At 1-92 (MSSLESARAD…PLILLGKSKN (92 aa)) the chain is on the cytoplasmic side. Residues 93-113 (ALLSTFLFLDQIVWAGRTGIY) traverse the membrane as a helical segment. Residues 114 to 206 (KNKERAEFLS…LLQLAPKKVT (93 aa)) are Lumenal-facing. A helical membrane pass occupies residues 207–226 (PRVTGAFGFASSLIACYQLL).

Belongs to the peroxin-11 family. Expressed in seedlings, roots, shoots, leaf sheaths, flag leaf, panicles, spikelets, and endosperm.

The protein localises to the peroxisome membrane. Its function is as follows. Involved in peroxisomal proliferation. The polypeptide is Peroxisomal membrane protein 11-5 (PEX11-5) (Oryza sativa subsp. japonica (Rice)).